Here is a 378-residue protein sequence, read N- to C-terminus: Mitogen-activated protein kinase mpkC (378 aa).

The Protein kinase domain maps to 20-300 (YVNPQPIGMG…AQDALRHPYL (281 aa)). ATP-binding positions include 26-34 (IGMGSFGLV) and Lys-49. Catalysis depends on Asp-141, which acts as the Proton acceptor.

Belongs to the protein kinase superfamily. Ser/Thr protein kinase family. MAP kinase subfamily. Requires Mg(2+) as cofactor.

Its subcellular location is the nucleus. The enzyme catalyses L-seryl-[protein] + ATP = O-phospho-L-seryl-[protein] + ADP + H(+). It catalyses the reaction L-threonyl-[protein] + ATP = O-phospho-L-threonyl-[protein] + ADP + H(+). Its activity is regulated as follows. Activated by threonine and tyrosine phosphorylation. In terms of biological role, mitogen-activated protein kinase (MAPK), part of the high-osmolarity glycerol (HOG) pathway. With sakA, plays a role in the osmotic and oxidative stress responses. Involved in paradoxical growth, the cell wall integrity (CWI) pathway and biofilm formation. SakA and mpkC collaborate during virulence and mpkC could act by modulating sakA activity upon exposure to several types of stresses and during cell wall biosynthesis. In Aspergillus fumigatus (strain CBS 144.89 / FGSC A1163 / CEA10) (Neosartorya fumigata), this protein is Mitogen-activated protein kinase mpkC.